Here is a 278-residue protein sequence, read N- to C-terminus: Undecaprenyl-diphosphatase (278 aa).

8 helical membrane passes run 3–23 (YILI…IPIS), 42–62 (VAYS…IFYF), 88–108 (FLVI…LFVI), 112–132 (ILGL…IVIY), 152–172 (IIIV…RSGM), 190–210 (LSFI…VLFS), 225–245 (GLLI…NALL), and 253–273 (VVLL…LSDI).

Belongs to the UppP family.

The protein localises to the cell membrane. It catalyses the reaction di-trans,octa-cis-undecaprenyl diphosphate + H2O = di-trans,octa-cis-undecaprenyl phosphate + phosphate + H(+). Its function is as follows. Catalyzes the dephosphorylation of undecaprenyl diphosphate (UPP). The chain is Undecaprenyl-diphosphatase from Saccharolobus solfataricus (strain ATCC 35092 / DSM 1617 / JCM 11322 / P2) (Sulfolobus solfataricus).